Here is a 226-residue protein sequence, read N- to C-terminus: Molybdenum transport system permease protein ModB (226 aa).

One can recognise an ABC transmembrane type-1 domain in the interval 11–217 (IRLTLELASL…SFLVLFALYS (207 aa)). A run of 5 helical transmembrane segments spans residues 17–37 (LASL…WWLA), 47–67 (IGAV…FYLL), 88–108 (LPFT…PFVV), 150–170 (ITAA…VLMI), and 197–217 (AHWL…ALYS).

This sequence belongs to the binding-protein-dependent transport system permease family. CysTW subfamily.

The protein resides in the cell inner membrane. Part of the binding-protein-dependent transport system for molybdenum; probably responsible for the translocation of the substrate across the membrane. The polypeptide is Molybdenum transport system permease protein ModB (modB) (Azotobacter vinelandii).